A 329-amino-acid chain; its full sequence is Quinone oxidoreductase (329 aa).

A2 carries the N-acetylalanine modification. Position 23 is an N6-acetyllysine (K23). Residues Y53, S158–V161, G181, H200, N229, V246–R249, and V269–L271 contribute to the NADP(+) site. Position 296 is an N6-succinyllysine (K296).

The protein belongs to the zinc-containing alcohol dehydrogenase family. Quinone oxidoreductase subfamily. As to quaternary structure, homotetramer.

It localises to the cytoplasm. The catalysed reaction is 2 a quinone + NADPH + H(+) = 2 a 1,4-benzosemiquinone + NADP(+). Its function is as follows. Does not have alcohol dehydrogenase activity. Binds NADP and acts through a one-electron transfer process. Orthoquinones, such as 1,2-naphthoquinone or 9,10-phenanthrenequinone, are the best substrates (in vitro). May act in the detoxification of xenobiotics. Interacts with (AU)-rich elements (ARE) in the 3'-UTR of target mRNA species and enhances their stability. NADPH binding interferes with mRNA binding. The polypeptide is Quinone oxidoreductase (Cryz) (Rattus norvegicus (Rat)).